We begin with the raw amino-acid sequence, 434 residues long: Trigger factor (434 aa).

One can recognise a PPIase FKBP-type domain in the interval 160-245; the sequence is DDKVKMNFIG…LTEVQAANLP (86 aa).

It belongs to the FKBP-type PPIase family. Tig subfamily.

The protein localises to the cytoplasm. It carries out the reaction [protein]-peptidylproline (omega=180) = [protein]-peptidylproline (omega=0). Functionally, involved in protein export. Acts as a chaperone by maintaining the newly synthesized protein in an open conformation. Functions as a peptidyl-prolyl cis-trans isomerase. This chain is Trigger factor, found in Shewanella frigidimarina (strain NCIMB 400).